A 92-amino-acid chain; its full sequence is UPF0223 protein SP_1404 (92 aa).

This sequence belongs to the UPF0223 family.

This is UPF0223 protein SP_1404 from Streptococcus pneumoniae serotype 4 (strain ATCC BAA-334 / TIGR4).